Consider the following 576-residue polypeptide: MLPHVVLTFRRLGCALASCRLAPARHRGSGLLHTAPVARSDRSAPVFTRALAFGDRIALVDQHGRHTYRELYSRSLRLSQEICRLCGCVGGDLREERVSFLCANDASYVVAQWASWMSGGVAVPLYRKHPAAQLEYVICDSQSSVVLASQEYLELLSPVVRKLGVPLLPLTPAIYTGAVEEPAEVPVPEQGWRNKGAMIIYTSGTTGRPKGVLSTHQNIRAVVTGLVHKWAWTKDDVILHVLPLHHVHGVVNALLCPLWVGATCVMMPEFSPQQVWEKFLSSETPRINVFMAVPTIYTKLMEYYDRHFTQPHAQDFLRAVCEEKIRLMVSGSAALPLPVLEKWKNITGHTLLERYGMTEIGMALSGPLTTAVRLPGSVGTPLPGVQVRIVSENPQREACSYTIHAEGDERGTKVTPGFEEKEGELLVRGPSVFREYWNKPEETKSAFTLDGWFKTGDTVVFKDGQYWIRGRTSVDIIKTGGYKVSALEVEWHLLAHPSITDVAVIGVPDMTWGQRVTAVVTLREGHSLSHRELKEWARNVLAPYAVPSELVLVEEIPRNQMGKIDKKALIRHFHPS.

The transit peptide at 1–83 (MLPHVVLTFR…RSLRLSQEIC (83 aa)) directs the protein to the mitochondrion. Residues 202 to 210 (TSGTTGRPK), aspartate 457, arginine 471, and lysine 563 each bind ATP.

Belongs to the ATP-dependent AMP-binding enzyme family.

Its subcellular location is the mitochondrion. It catalyses the reaction tetracosanoate + ATP + CoA = tetracosanoyl-CoA + AMP + diphosphate. The enzyme catalyses malonate + ATP + CoA = malonyl-CoA + AMP + diphosphate. Catalyzes the initial reaction in intramitochondrial fatty acid synthesis, by activating malonate and methylmalonate, but not acetate, into their respective CoA thioester. May have some preference toward very-long-chain substrates. This chain is Malonate--CoA ligase ACSF3, mitochondrial, found in Homo sapiens (Human).